Here is a 304-residue protein sequence, read N- to C-terminus: Sulfate adenylyltransferase subunit 2 (304 aa).

The protein belongs to the PAPS reductase family. CysD subfamily. In terms of assembly, heterodimer composed of CysD, the smaller subunit, and CysN.

It carries out the reaction sulfate + ATP + H(+) = adenosine 5'-phosphosulfate + diphosphate. Its pathway is sulfur metabolism; hydrogen sulfide biosynthesis; sulfite from sulfate: step 1/3. Functionally, with CysN forms the ATP sulfurylase (ATPS) that catalyzes the adenylation of sulfate producing adenosine 5'-phosphosulfate (APS) and diphosphate, the first enzymatic step in sulfur assimilation pathway. APS synthesis involves the formation of a high-energy phosphoric-sulfuric acid anhydride bond driven by GTP hydrolysis by CysN coupled to ATP hydrolysis by CysD. This is Sulfate adenylyltransferase subunit 2 from Halorhodospira halophila (strain DSM 244 / SL1) (Ectothiorhodospira halophila (strain DSM 244 / SL1)).